The sequence spans 260 residues: Uroplakin-1b (260 aa).

The Cytoplasmic portion of the chain corresponds to 1 to 15 (MAKDDSTVRCFQGLL). Residues 16 to 36 (IFGHVIVGMCGIALTAECIFF) traverse the membrane as a helical segment. Topologically, residues 37-59 (VSDQHSLYPLLEATNNDDIFGAA) are extracellular. Residues 60–80 (WIGMFVGICLFCLSVLAIVGI) form a helical membrane-spanning segment. Over 81–86 (MKSNRK) the chain is Cytoplasmic. Residues 87–107 (ILLAYFIMMFIVYGFEVASCI) traverse the membrane as a helical segment. Over 108–229 (TAATQRDFFT…ELISGPMDRH (122 aa)) the chain is Extracellular. A helical transmembrane segment spans residues 230 to 250 (AWGVAWFGFAILCWTFWVLLG). At 251–260 (TMFYWSRIEY) the chain is on the cytoplasmic side.

Belongs to the tetraspanin (TM4SF) family. As to quaternary structure, heterodimer with uroplakin-3A (UPK3A) or uroplakin-3B (UPK3B). N-glycosylated with high-mannose oligosaccharides.

Its subcellular location is the membrane. In terms of biological role, component of the asymmetric unit membrane (AUM); a highly specialized biomembrane elaborated by terminally differentiated urothelial cells. May play an important role in normal bladder epithelial physiology, possibly in regulating membrane permeability of superficial umbrella cells or in stabilizing the apical membrane through AUM/cytoskeletal interactions. The sequence is that of Uroplakin-1b (Upk1b) from Rattus norvegicus (Rat).